We begin with the raw amino-acid sequence, 119 residues long: Large ribosomal subunit protein uL24 (119 aa).

This sequence belongs to the universal ribosomal protein uL24 family. Part of the 50S ribosomal subunit.

Its function is as follows. One of two assembly initiator proteins, it binds directly to the 5'-end of the 23S rRNA, where it nucleates assembly of the 50S subunit. One of the proteins that surrounds the polypeptide exit tunnel on the outside of the subunit. The chain is Large ribosomal subunit protein uL24 from Leptospira interrogans serogroup Icterohaemorrhagiae serovar copenhageni (strain Fiocruz L1-130).